The primary structure comprises 354 residues: Homoserine O-succinyltransferase (354 aa).

The active-site Acyl-thioester intermediate is Cys146. The substrate site is built by Lys167 and Ser196. The Proton acceptor role is filled by His239. The active site involves Glu241. A substrate-binding site is contributed by Arg253.

It belongs to the MetA family.

It is found in the cytoplasm. It carries out the reaction L-homoserine + succinyl-CoA = O-succinyl-L-homoserine + CoA. Its pathway is amino-acid biosynthesis; L-methionine biosynthesis via de novo pathway; O-succinyl-L-homoserine from L-homoserine: step 1/1. In terms of biological role, transfers a succinyl group from succinyl-CoA to L-homoserine, forming succinyl-L-homoserine. This Methylobacter tundripaludum (strain ATCC BAA-1195 / DSM 17260 / SV96) protein is Homoserine O-succinyltransferase.